A 155-amino-acid chain; its full sequence is Ribosome maturation factor RimP (155 aa).

It belongs to the RimP family.

It localises to the cytoplasm. Required for maturation of 30S ribosomal subunits. This chain is Ribosome maturation factor RimP, found in Staphylococcus saprophyticus subsp. saprophyticus (strain ATCC 15305 / DSM 20229 / NCIMB 8711 / NCTC 7292 / S-41).